Reading from the N-terminus, the 272-residue chain is 2-succinyl-6-hydroxy-2,4-cyclohexadiene-1-carboxylate synthase (272 aa).

It belongs to the AB hydrolase superfamily. MenH family. Monomer.

It carries out the reaction 5-enolpyruvoyl-6-hydroxy-2-succinyl-cyclohex-3-ene-1-carboxylate = (1R,6R)-6-hydroxy-2-succinyl-cyclohexa-2,4-diene-1-carboxylate + pyruvate. Its pathway is quinol/quinone metabolism; 1,4-dihydroxy-2-naphthoate biosynthesis; 1,4-dihydroxy-2-naphthoate from chorismate: step 3/7. It participates in quinol/quinone metabolism; menaquinone biosynthesis. Catalyzes a proton abstraction reaction that results in 2,5-elimination of pyruvate from 2-succinyl-5-enolpyruvyl-6-hydroxy-3-cyclohexene-1-carboxylate (SEPHCHC) and the formation of 2-succinyl-6-hydroxy-2,4-cyclohexadiene-1-carboxylate (SHCHC). This is 2-succinyl-6-hydroxy-2,4-cyclohexadiene-1-carboxylate synthase from Yersinia pseudotuberculosis serotype IB (strain PB1/+).